A 234-amino-acid polypeptide reads, in one-letter code: Large ribosomal subunit protein uL1 (234 aa).

It belongs to the universal ribosomal protein uL1 family. In terms of assembly, part of the 50S ribosomal subunit.

Its function is as follows. Binds directly to 23S rRNA. The L1 stalk is quite mobile in the ribosome, and is involved in E site tRNA release. Protein L1 is also a translational repressor protein, it controls the translation of the L11 operon by binding to its mRNA. The chain is Large ribosomal subunit protein uL1 from Pectobacterium atrosepticum (strain SCRI 1043 / ATCC BAA-672) (Erwinia carotovora subsp. atroseptica).